A 65-amino-acid chain; its full sequence is Large ribosomal subunit protein uL29 (65 aa).

It belongs to the universal ribosomal protein uL29 family.

The sequence is that of Large ribosomal subunit protein uL29 from Mycoplasmopsis synoviae (strain 53) (Mycoplasma synoviae).